We begin with the raw amino-acid sequence, 321 residues long: Inner membrane protein YtfF (321 aa).

At 1 to 4 (MISG) the chain is on the cytoplasmic side. Residues 5 to 25 (VLYALLAGLMWGLIFVGPLIV) traverse the membrane as a helical segment. Residues 13–141 (LMWGLIFVGP…IGIGLACVNI (129 aa)) form the EamA domain. The Periplasmic segment spans residues 26 to 30 (PEYPA). Residues 31-51 (MLQSMGRYLALGLIALPIAWL) traverse the membrane as a helical segment. Residues 52-65 (GRVRLRQLARRDWL) are Cytoplasmic-facing. Residues 66-86 (TALMLTMMGNLIYYFCLASAI) traverse the membrane as a helical segment. Residues 87-92 (QRTGAP) lie on the Periplasmic side of the membrane. Residues 93 to 113 (VSTMIIGTLPVVIPVFANLLY) form a helical membrane-spanning segment. Over 114 to 120 (SQRDGKL) the chain is Cytoplasmic. A helical membrane pass occupies residues 121–141 (AWGKLAPALICIGIGLACVNI). Residues 142–154 (AELNHGLPDFDWA) are Periplasmic-facing. A helical transmembrane segment spans residues 155-175 (RYTSGIVLALVSVVCWAWYAL). The Cytoplasmic portion of the chain corresponds to 176-194 (RNARWLRENPDKHPMMWAT). A helical membrane pass occupies residues 195–215 (AQALVTLPVSLIGYLVACYWL). Topologically, residues 216 to 230 (NTQTPDFSLPFGPRP) are periplasmic. The chain crosses the membrane as a helical span at residues 231–251 (LVFISLMVAIAVLCSWVGALC). Over 252–261 (WNVASQLLPT) the chain is Cytoplasmic. The helical transmembrane segment at 262–282 (VILGPLIVFETLAGLLYTFLL) threads the bilayer. At 283-285 (RQQ) the chain is on the periplasmic side. A helical membrane pass occupies residues 286–306 (MPPLMTLSGIALLVIGVVIAV). Residues 307 to 321 (RAKPEKPLTESVSES) are Cytoplasmic-facing.

The protein localises to the cell inner membrane. This Escherichia coli (strain K12) protein is Inner membrane protein YtfF (ytfF).